The primary structure comprises 328 residues: Beta-ketoacyl-[acyl-carrier-protein] synthase III (328 aa).

Active-site residues include Cys122 and His255. Residues Gln256–Arg260 are ACP-binding. The active site involves Asn285.

It belongs to the thiolase-like superfamily. FabH family. As to quaternary structure, homodimer.

It localises to the cytoplasm. The catalysed reaction is malonyl-[ACP] + acetyl-CoA + H(+) = 3-oxobutanoyl-[ACP] + CO2 + CoA. It functions in the pathway lipid metabolism; fatty acid biosynthesis. Functionally, catalyzes the condensation reaction of fatty acid synthesis by the addition to an acyl acceptor of two carbons from malonyl-ACP. Catalyzes the first condensation reaction which initiates fatty acid synthesis and may therefore play a role in governing the total rate of fatty acid production. Possesses both acetoacetyl-ACP synthase and acetyl transacylase activities. Its substrate specificity determines the biosynthesis of branched-chain and/or straight-chain of fatty acids. The protein is Beta-ketoacyl-[acyl-carrier-protein] synthase III of Polynucleobacter asymbioticus (strain DSM 18221 / CIP 109841 / QLW-P1DMWA-1) (Polynucleobacter necessarius subsp. asymbioticus).